The chain runs to 101 residues: Small ribosomal subunit protein uS14 (101 aa).

Positions 1 to 24 are disordered; sequence MAKVSSIKKNEKRKKLSQSLHNKR. The segment covering 10–24 has biased composition (basic residues); the sequence is NEKRKKLSQSLHNKR.

Belongs to the universal ribosomal protein uS14 family. As to quaternary structure, part of the 30S ribosomal subunit. Contacts proteins S3 and S10.

Binds 16S rRNA, required for the assembly of 30S particles and may also be responsible for determining the conformation of the 16S rRNA at the A site. This is Small ribosomal subunit protein uS14 from Rickettsia bellii (strain OSU 85-389).